The primary structure comprises 64 residues: Large ribosomal subunit protein bL35 (64 aa).

Residues 1 to 22 (MPKMKSHTGMGKRVRVTGKGKI) show a composition bias toward basic residues. A disordered region spans residues 1–39 (MPKMKSHTGMGKRVRVTGKGKIVKQQAGLRHNLEKKPST).

The protein belongs to the bacterial ribosomal protein bL35 family.

In Salinispora arenicola (strain CNS-205), this protein is Large ribosomal subunit protein bL35.